The chain runs to 300 residues: Protoheme IX farnesyltransferase (300 aa).

The next 8 membrane-spanning stretches (helical) occupy residues 24 to 44 (VTQLAVFCAVIGMFLATPGMV), 46 to 66 (WHVLIGGTIGIWLLAGAAFAI), 94 to 114 (PQILLFSAVLGSVGAWTLYTF), 118 to 138 (LTMWLTIATFVGYAVVYTLLL), 146 to 166 (IVIGGASGAMPPALGWAAVTG), 172 to 192 (AWILVLIIFVWTPPHFWVLAL), 224 to 244 (VILFAVTLMPFISGMSGVVYL), and 278 to 298 (IVYLSLLFAALLVDHYARPLL).

This sequence belongs to the UbiA prenyltransferase family. Protoheme IX farnesyltransferase subfamily.

The protein localises to the cell inner membrane. It catalyses the reaction heme b + (2E,6E)-farnesyl diphosphate + H2O = Fe(II)-heme o + diphosphate. It participates in porphyrin-containing compound metabolism; heme O biosynthesis; heme O from protoheme: step 1/1. In terms of biological role, converts heme B (protoheme IX) to heme O by substitution of the vinyl group on carbon 2 of heme B porphyrin ring with a hydroxyethyl farnesyl side group. The polypeptide is Protoheme IX farnesyltransferase (Burkholderia ambifaria (strain ATCC BAA-244 / DSM 16087 / CCUG 44356 / LMG 19182 / AMMD) (Burkholderia cepacia (strain AMMD))).